Here is a 157-residue protein sequence, read N- to C-terminus: Transcriptional repressor NrdR (157 aa).

The segment at 1–22 (MKCPYCSSPDSRVINSRPSDDG) is disordered. The segment at 3–34 (CPYCSSPDSRVINSRPSDDGASIRRRRECLTC) is a zinc-finger region. A compositionally biased stretch (polar residues) spans 8–17 (SPDSRVINSR). The region spanning 49–136 (LMVVKRSGVR…VYRDFDSLER (88 aa)) is the ATP-cone domain.

Belongs to the NrdR family. It depends on Zn(2+) as a cofactor.

Its function is as follows. Negatively regulates transcription of bacterial ribonucleotide reductase nrd genes and operons by binding to NrdR-boxes. This Deinococcus radiodurans (strain ATCC 13939 / DSM 20539 / JCM 16871 / CCUG 27074 / LMG 4051 / NBRC 15346 / NCIMB 9279 / VKM B-1422 / R1) protein is Transcriptional repressor NrdR.